The sequence spans 407 residues: Prolyl hydroxylase EGLN2 (407 aa).

Low complexity-rich tracts occupy residues 1–24 and 57–75; these read MDSP…SSEP and ASAG…TASP. Disordered regions lie at residues 1 to 34, 50 to 89, and 108 to 157; these read MDSP…RARM, CPGV…GELR, and AAQG…CSSG. The Bipartite nuclear localization signal motif lies at 89-134; the sequence is RPLQSEGAAALVTKGCQRLAAQGARPEAPKRKWAEDGGDAPSPSKR. At serine 130 the chain carries Phosphoserine. The beta(2)beta(3) 'finger-like' loop stretch occupies residues 225-235; it reads VSQRAIPPRSI. A Fe2OG dioxygenase domain is found at 278–376; that stretch reads GRTKAMVACY…RYAITVWYFD (99 aa). Positions 297, 299, and 358 each coordinate Fe cation. Position 367 (arginine 367) interacts with 2-oxoglutarate.

Interacts (preferably isoform p40) with SIAH2; the interaction targets both SIAH2 isoforms for proteasomal degradation in vitro. Interacts with LIMD1, WTIP and AJUBA. Fe(2+) is required as a cofactor. Requires L-ascorbate as cofactor. In terms of processing, ubiquitinated by SIAH1 and/or SIAH2 in response to the unfolded protein response (UPR), leading to its degradation. Expressed in adult and fetal heart, brain, liver, lung, skeletal muscle, and kidney. Also expressed in testis and placenta. Highest levels in adult brain, placenta, lung, kidney, and testis. Expressed in hormone responsive tissues, including normal and cancerous mammary, ovarian and prostate epithelium.

It localises to the nucleus. It catalyses the reaction L-prolyl-[protein] + 2-oxoglutarate + O2 = trans-4-hydroxy-L-prolyl-[protein] + succinate + CO2. The catalysed reaction is L-prolyl-[hypoxia-inducible factor alpha subunit] + 2-oxoglutarate + O2 = trans-4-hydroxy-L-prolyl-[hypoxia-inducible factor alpha subunit] + succinate + CO2. Its function is as follows. Prolyl hydroxylase that mediates hydroxylation of proline residues in target proteins, such as ATF4, IKBKB, CEP192 and HIF1A. Target proteins are preferentially recognized via a LXXLAP motif. Cellular oxygen sensor that catalyzes, under normoxic conditions, the post-translational formation of 4-hydroxyproline in hypoxia-inducible factor (HIF) alpha proteins. Hydroxylates a specific proline found in each of the oxygen-dependent degradation (ODD) domains (N-terminal, NODD, and C-terminal, CODD) of HIF1A. Also hydroxylates HIF2A. Has a preference for the CODD site for both HIF1A and HIF2A. Hydroxylated HIFs are then targeted for proteasomal degradation via the von Hippel-Lindau ubiquitination complex. Under hypoxic conditions, the hydroxylation reaction is attenuated allowing HIFs to escape degradation resulting in their translocation to the nucleus, heterodimerization with HIF1B, and increased expression of hypoxy-inducible genes. EGLN2 is involved in regulating hypoxia tolerance and apoptosis in cardiac and skeletal muscle. Also regulates susceptibility to normoxic oxidative neuronal death. Links oxygen sensing to cell cycle and primary cilia formation by hydroxylating the critical centrosome component CEP192 which promotes its ubiquitination and subsequent proteasomal degradation. Hydroxylates IKBKB, mediating NF-kappa-B activation in hypoxic conditions. Also mediates hydroxylation of ATF4, leading to decreased protein stability of ATF4. This is Prolyl hydroxylase EGLN2 from Homo sapiens (Human).